The primary structure comprises 1041 residues: Sodium/potassium-transporting ATPase subunit alpha (1041 aa).

Helical transmembrane passes span 115–135, 147–167, 312–332, and 338–358; these read FGGF…AYSI, NLYL…FSYY, LITG…FILG, and AVIF…LATV. Residue Asp394 is the 4-aspartylphosphate intermediate of the active site. Residue Lys526 coordinates ATP. 4 helical membrane-spanning segments follow: residues 808 to 828, 870 to 890, 935 to 955, and 970 to 990; these read FLAF…ILCI, MAYG…YFVI, TCHT…LIIC, and WALN…SYCP.

This sequence belongs to the cation transport ATPase (P-type) (TC 3.A.3) family. Type IIC subfamily. The sodium/potassium-transporting ATPase is composed of a catalytic alpha subunit, an auxiliary non-catalytic beta subunit and an additional regulatory subunit. In terms of tissue distribution, high levels are found in some adult tissues: Malpighian tubules, indirect flight muscles, tubular leg muscles and throughout the nervous system (brain, optic lobes, retina and ventral thoracic neuromere). Lower levels are detected at the posterior end where the reproductive organs and rectum are located.

It localises to the cell membrane. The catalysed reaction is K(+)(out) + Na(+)(in) + ATP + H2O = K(+)(in) + Na(+)(out) + ADP + phosphate + H(+). Functionally, this is the catalytic component of the active enzyme, which catalyzes the hydrolysis of ATP coupled with the exchange of sodium and potassium ions across the plasma membrane. This action creates the electrochemical gradient of sodium and potassium ions, providing the energy for active transport of various nutrients. This chain is Sodium/potassium-transporting ATPase subunit alpha (Atpalpha), found in Drosophila melanogaster (Fruit fly).